The chain runs to 429 residues: Glutamate-1-semialdehyde 2,1-aminomutase (429 aa).

Position 272 is an N6-(pyridoxal phosphate)lysine (lysine 272).

It belongs to the class-III pyridoxal-phosphate-dependent aminotransferase family. HemL subfamily. It depends on pyridoxal 5'-phosphate as a cofactor.

Its subcellular location is the cytoplasm. It catalyses the reaction (S)-4-amino-5-oxopentanoate = 5-aminolevulinate. It functions in the pathway porphyrin-containing compound metabolism; protoporphyrin-IX biosynthesis; 5-aminolevulinate from L-glutamyl-tRNA(Glu): step 2/2. The protein is Glutamate-1-semialdehyde 2,1-aminomutase of Methanothrix thermoacetophila (strain DSM 6194 / JCM 14653 / NBRC 101360 / PT) (Methanosaeta thermophila).